The following is a 393-amino-acid chain: Tryptophan synthase beta chain (393 aa).

Lys86 carries the N6-(pyridoxal phosphate)lysine modification.

Belongs to the TrpB family. As to quaternary structure, tetramer of two alpha and two beta chains. Pyridoxal 5'-phosphate serves as cofactor.

It carries out the reaction (1S,2R)-1-C-(indol-3-yl)glycerol 3-phosphate + L-serine = D-glyceraldehyde 3-phosphate + L-tryptophan + H2O. It functions in the pathway amino-acid biosynthesis; L-tryptophan biosynthesis; L-tryptophan from chorismate: step 5/5. Functionally, the beta subunit is responsible for the synthesis of L-tryptophan from indole and L-serine. In Alteromonas mediterranea (strain DSM 17117 / CIP 110805 / LMG 28347 / Deep ecotype), this protein is Tryptophan synthase beta chain.